A 417-amino-acid polypeptide reads, in one-letter code: Sterile alpha motif domain-containing protein 14 (417 aa).

Residues 37 to 306 (LLVKGRRHRP…QETKCSYPYH (270 aa)) are disordered. Over residues 40-49 (KGRRHRPSRS) the composition is skewed to basic residues. 2 positions are modified to phosphoserine: serine 84 and serine 108. The segment covering 138–153 (SGSPPRSAPSSDSSPS) has biased composition (low complexity). A compositionally biased stretch (basic and acidic residues) spans 159-173 (PRAEPHSEDDSRDAS). Phosphoserine is present on residues serine 173 and serine 179. Low complexity-rich tracts occupy residues 244–260 (SGKG…PTCS) and 276–289 (STLS…SSSP). A Phosphoserine modification is found at serine 279. Threonine 283 is subject to Phosphothreonine. One can recognise an SAM domain in the interval 326–389 (WTSQQVGQWL…KRKLKELAAA (64 aa)). Residues 375 to 416 (DRALVKRKLKELAAAAEKERKAQEKTARQREKLRRREHEAKK) adopt a coiled-coil conformation. Residues 390–417 (AEKERKAQEKTARQREKLRRREHEAKKS) are disordered.

This is Sterile alpha motif domain-containing protein 14 (Samd14) from Rattus norvegicus (Rat).